A 364-amino-acid polypeptide reads, in one-letter code: MNAKTYEALETMQKRLLQILKDLEDENILKDIKKFTELNKEKSNLEEVVEKFVEYKKAVEHIKDAKAILENEKDQELIELAKIELDENNDKVEHLQQVIEEMLLPKDPNDDKNVIVEIRGAAGGDEANIFAGDLLRMYKLYAETQNWKINILEASVGEAGGYSQVVFMIKGDRVYSKLKFESGAHRVQRVPKTEAKGRIQTSTATVAVLPEMSEVEIEIRSNDLRIDTYRASGAGGQHVNTTDSAVRITHLPTGIVVTSQDGRSQHDNKDIAMTMLRTKVYEAEVEKQQAQADATRKNAVGTGARSEKIRTYNYPQNRVTDHRVGLTLNKLDQVMEGNIDEFIIALINEEQRQKVAEQLEKNNE.

Gln-237 is subject to N5-methylglutamine.

It belongs to the prokaryotic/mitochondrial release factor family. In terms of processing, methylated by PrmC. Methylation increases the termination efficiency of RF1.

It localises to the cytoplasm. In terms of biological role, peptide chain release factor 1 directs the termination of translation in response to the peptide chain termination codons UAG and UAA. The protein is Peptide chain release factor 1 of Mycoplasma mycoides subsp. mycoides SC (strain CCUG 32753 / NCTC 10114 / PG1).